Here is a 227-residue protein sequence, read N- to C-terminus: Ubiquitin carboxyl-terminal hydrolase (227 aa).

Positions 3–224 constitute a UCH catalytic domain; sequence TWTPLESNPE…VRFTVLALTA (222 aa). The active-site Nucleophile is the Cys93. The active-site Proton donor is the His164.

The protein belongs to the peptidase C12 family.

It carries out the reaction Thiol-dependent hydrolysis of ester, thioester, amide, peptide and isopeptide bonds formed by the C-terminal Gly of ubiquitin (a 76-residue protein attached to proteins as an intracellular targeting signal).. Ubiquitin-protein hydrolase is involved both in the processing of ubiquitin precursors and of ubiquitinated proteins. This enzyme is a thiol protease that recognizes and hydrolyzes a peptide bond at the C-terminal glycine of ubiquitin. The sequence is that of Ubiquitin carboxyl-terminal hydrolase (Uch) from Drosophila melanogaster (Fruit fly).